Reading from the N-terminus, the 414-residue chain is uncharacterized protein (414 aa).

3 disordered regions span residues 136–168 (SSKSMAPTAEKELEKPLENGSELQEGDSLTVPT), 298–322 (KNFPDSGMRRAVQTPSPQNKMSYHR), and 350–382 (PPHSRPMHGSYNKVHVNKEPKPNLSPDKYMSTS).

This is an uncharacterized protein from Macaca fascicularis (Crab-eating macaque).